The sequence spans 393 residues: Flavohemoprotein (393 aa).

In terms of domain architecture, Globin spans 1-139; it reads MLSNAQRALI…LADLLIEAEE (139 aa). Position 85 (His85) interacts with heme b. Active-site charge relay system residues include Tyr95 and Glu138. The tract at residues 150 to 393 is reductase; the sequence is GGWRGVRRFR…FFGPAAALDA (244 aa). Residues 153 to 256 enclose the FAD-binding FR-type domain; it reads RGVRRFRVAR…FPPAGDFVLR (104 aa). FAD contacts are provided by residues Tyr191 and 205–208; that span reads RNYS. Residue 268-273 participates in NADP(+) binding; the sequence is GVGITP. Residue 384–387 coordinates FAD; it reads FFGP.

It belongs to the globin family. Two-domain flavohemoproteins subfamily. In the C-terminal section; belongs to the flavoprotein pyridine nucleotide cytochrome reductase family. It depends on heme b as a cofactor. The cofactor is FAD.

The enzyme catalyses 2 nitric oxide + NADPH + 2 O2 = 2 nitrate + NADP(+) + H(+). The catalysed reaction is 2 nitric oxide + NADH + 2 O2 = 2 nitrate + NAD(+) + H(+). Its function is as follows. Is involved in NO detoxification in an aerobic process, termed nitric oxide dioxygenase (NOD) reaction that utilizes O(2) and NAD(P)H to convert NO to nitrate, which protects the bacterium from various noxious nitrogen compounds. Therefore, plays a central role in the inducible response to nitrosative stress. The protein is Flavohemoprotein of Pseudomonas aeruginosa (strain ATCC 15692 / DSM 22644 / CIP 104116 / JCM 14847 / LMG 12228 / 1C / PRS 101 / PAO1).